Here is a 366-residue protein sequence, read N- to C-terminus: S-adenosylmethionine:tRNA ribosyltransferase-isomerase (366 aa).

It belongs to the QueA family. Monomer.

The protein localises to the cytoplasm. It carries out the reaction 7-aminomethyl-7-carbaguanosine(34) in tRNA + S-adenosyl-L-methionine = epoxyqueuosine(34) in tRNA + adenine + L-methionine + 2 H(+). Its pathway is tRNA modification; tRNA-queuosine biosynthesis. Transfers and isomerizes the ribose moiety from AdoMet to the 7-aminomethyl group of 7-deazaguanine (preQ1-tRNA) to give epoxyqueuosine (oQ-tRNA). This Parasynechococcus marenigrum (strain WH8102) protein is S-adenosylmethionine:tRNA ribosyltransferase-isomerase.